Here is a 436-residue protein sequence, read N- to C-terminus: Ribulose bisphosphate carboxylase large chain (436 aa).

The substrate site is built by Asn-104 and Thr-154. Lys-156 serves as the catalytic Proton acceptor. Residue Lys-158 coordinates substrate. Mg(2+) contacts are provided by Lys-182, Asp-184, and Glu-185. The residue at position 182 (Lys-182) is an N6-carboxylysine. His-275 functions as the Proton acceptor in the catalytic mechanism. Substrate-binding residues include Arg-276, His-308, and Ser-360.

The protein belongs to the RuBisCO large chain family. Type I subfamily. As to quaternary structure, heterohexadecamer of 8 large chains and 8 small chains; disulfide-linked. The disulfide link is formed within the large subunit homodimers. The cofactor is Mg(2+). The disulfide bond which can form in the large chain dimeric partners within the hexadecamer appears to be associated with oxidative stress and protein turnover.

Its subcellular location is the plastid. It is found in the chloroplast. The catalysed reaction is 2 (2R)-3-phosphoglycerate + 2 H(+) = D-ribulose 1,5-bisphosphate + CO2 + H2O. It catalyses the reaction D-ribulose 1,5-bisphosphate + O2 = 2-phosphoglycolate + (2R)-3-phosphoglycerate + 2 H(+). Functionally, ruBisCO catalyzes two reactions: the carboxylation of D-ribulose 1,5-bisphosphate, the primary event in carbon dioxide fixation, as well as the oxidative fragmentation of the pentose substrate in the photorespiration process. Both reactions occur simultaneously and in competition at the same active site. The sequence is that of Ribulose bisphosphate carboxylase large chain from Euglena anabaena (Euglenaria anabaena).